A 618-amino-acid polypeptide reads, in one-letter code: MDMEKLKEILLKAKKLGFSDKQIANLLGMDEIEVRDLRKKLNIIPLYKMVDTCAAEFEAKTPYYYSAYETFVYKEQDESNPSDRKKVIIIGSGPIRIGQGIEFDYSSVHAVLALKEMGIEAIIINNNPETVSTDYDTSDKLYFEPITFEEVLNIAEREKEKGELLGVIVQFGGQTAINLAMKLKNAGVNILGTTPENINAAEDREEFSKLLKKLNIPQAEGGTAYTKEEALEIAKRIGYPVLVRPSYVLGGRAMQIVYSEDELIEYMEEAVKVSEEHPVLIDKFLEDAIELDVDAVCDGESVLIGAIMEHIEEAGVHSGDSATVIPPQTLPKEIIDTVIDYTAKLARALNIVGLLNVQYAVKDGVVYVLEANPRASRTVPYVSKSVGIPLAKLATKIMLGKKLEELIKDYDVEKVAEKVWIAKPKYVSIKEAVFPFQKLPGVDPVLGPEMKSTGEAIGIDKDFGRAYYKAQLSANMELPIVGNVFISVRDRDKKHIVDVAKKLHELGFTIYATEGTAKVLRENGIPAILVKKISESPNDNILKLMRDGKMHLIINTSSGKKAKSDGYYIRRAAVDLGIPYITTIPGAKAAVKAIEAVKTGELSVYSLDELDARIKNRF.

The oligomerization domain stretch occupies residues 1 to 78; that stretch reads MDMEKLKEIL…ETFVYKEQDE (78 aa). The tract at residues 79 to 477 is carbamoyl phosphate synthetic domain; that stretch reads SNPSDRKKVI…YKAQLSANME (399 aa). One can recognise an ATP-grasp domain in the interval 208-399; sequence SKLLKKLNIP…LAKLATKIML (192 aa). Residues arginine 244, lysine 283, leucine 285, glutamate 290, glycine 315, valine 316, histidine 317, serine 318, glutamine 358, and glutamate 370 each contribute to the ATP site. The Mg(2+) site is built by glutamine 358, glutamate 370, and asparagine 372. The Mn(2+) site is built by glutamine 358, glutamate 370, and asparagine 372. One can recognise an MGS-like domain in the interval 476–618; that stretch reads MELPIVGNVF…ELDARIKNRF (143 aa). Positions 478 to 618 are allosteric domain; sequence LPIVGNVFIS…ELDARIKNRF (141 aa).

This sequence belongs to the CarB family. In terms of assembly, composed of two chains; the small (or glutamine) chain promotes the hydrolysis of glutamine to ammonia, which is used by the large (or ammonia) chain to synthesize carbamoyl phosphate. Tetramer of heterodimers (alpha,beta)4. Mg(2+) is required as a cofactor. The cofactor is Mn(2+).

The enzyme catalyses hydrogencarbonate + L-glutamine + 2 ATP + H2O = carbamoyl phosphate + L-glutamate + 2 ADP + phosphate + 2 H(+). It catalyses the reaction hydrogencarbonate + NH4(+) + 2 ATP = carbamoyl phosphate + 2 ADP + phosphate + 2 H(+). It participates in amino-acid biosynthesis; L-arginine biosynthesis; carbamoyl phosphate from bicarbonate: step 1/1. Its pathway is pyrimidine metabolism; UMP biosynthesis via de novo pathway; (S)-dihydroorotate from bicarbonate: step 1/3. Functionally, large subunit of the glutamine-dependent carbamoyl phosphate synthetase (CPSase). CPSase catalyzes the formation of carbamoyl phosphate from the ammonia moiety of glutamine, carbonate, and phosphate donated by ATP, constituting the first step of 2 biosynthetic pathways, one leading to arginine and/or urea and the other to pyrimidine nucleotides. The large subunit (synthetase) binds the substrates ammonia (free or transferred from glutamine from the small subunit), hydrogencarbonate and ATP and carries out an ATP-coupled ligase reaction, activating hydrogencarbonate by forming carboxy phosphate which reacts with ammonia to form carbamoyl phosphate. This is Carbamoyl phosphate synthase large chain, C-terminal section (carB2) from Methanocaldococcus jannaschii (strain ATCC 43067 / DSM 2661 / JAL-1 / JCM 10045 / NBRC 100440) (Methanococcus jannaschii).